The primary structure comprises 218 residues: Octanoyltransferase (218 aa).

Positions 32-218 constitute a BPL/LPL catalytic domain; that stretch reads GDAPEAVWLL…LRTFSRSFPD (187 aa). Residues 71–78, 151–153, and 164–166 each bind substrate; these read RGGQYTYH, AIG, and GLS. The Acyl-thioester intermediate role is filled by cysteine 182.

It belongs to the LipB family.

The protein localises to the cytoplasm. It carries out the reaction octanoyl-[ACP] + L-lysyl-[protein] = N(6)-octanoyl-L-lysyl-[protein] + holo-[ACP] + H(+). The protein operates within protein modification; protein lipoylation via endogenous pathway; protein N(6)-(lipoyl)lysine from octanoyl-[acyl-carrier-protein]: step 1/2. Catalyzes the transfer of endogenously produced octanoic acid from octanoyl-acyl-carrier-protein onto the lipoyl domains of lipoate-dependent enzymes. Lipoyl-ACP can also act as a substrate although octanoyl-ACP is likely to be the physiological substrate. The sequence is that of Octanoyltransferase from Cereibacter sphaeroides (strain ATCC 17025 / ATH 2.4.3) (Rhodobacter sphaeroides).